We begin with the raw amino-acid sequence, 382 residues long: D-alanine--D-alanine ligase (382 aa).

An ATP-grasp domain is found at 139–348 (KRLMRDAGLP…PPALMDALIA (210 aa)). 168-223 (EALESRTLFVKPANMGSSVGVSRVADAGQFDQALAHAFAYDEKILIERAVPRAREI) lines the ATP pocket. Mg(2+) is bound by residues Asp-300, Glu-315, and Asn-317.

This sequence belongs to the D-alanine--D-alanine ligase family. Mg(2+) serves as cofactor. Mn(2+) is required as a cofactor.

Its subcellular location is the cytoplasm. The enzyme catalyses 2 D-alanine + ATP = D-alanyl-D-alanine + ADP + phosphate + H(+). It participates in cell wall biogenesis; peptidoglycan biosynthesis. Its function is as follows. Cell wall formation. The chain is D-alanine--D-alanine ligase from Methylobacterium sp. (strain 4-46).